The primary structure comprises 249 residues: Quinate/shikimate dehydrogenase (249 aa).

Positions 32 and 68 each coordinate substrate. NAD(+) contacts are provided by residues 93–96 (AGGA), 116–119 (NRRD), Lys-166, 193–196 (CVYN), and Gly-216.

This sequence belongs to the shikimate dehydrogenase family. As to quaternary structure, homodimer.

It carries out the reaction L-quinate + NAD(+) = 3-dehydroquinate + NADH + H(+). It catalyses the reaction L-quinate + NADP(+) = 3-dehydroquinate + NADPH + H(+). The catalysed reaction is shikimate + NADP(+) = 3-dehydroshikimate + NADPH + H(+). The enzyme catalyses shikimate + NAD(+) = 3-dehydroshikimate + NADH + H(+). It participates in metabolic intermediate biosynthesis; chorismate biosynthesis; chorismate from D-erythrose 4-phosphate and phosphoenolpyruvate: step 4/7. Its function is as follows. The actual biological function of YdiB remains unclear, nor is it known whether 3-dehydroshikimate or quinate represents the natural substrate. Catalyzes the reversible NAD-dependent reduction of both 3-dehydroshikimate (DHSA) and 3-dehydroquinate to yield shikimate (SA) and quinate, respectively. It can use both NAD or NADP for catalysis, however it has higher catalytic efficiency with NAD. The polypeptide is Quinate/shikimate dehydrogenase (Shigella flexneri serotype 5b (strain 8401)).